A 398-amino-acid polypeptide reads, in one-letter code: Dihydrolipoyllysine-residue acetyltransferase component of acetoin cleaving system (398 aa).

One can recognise a Lipoyl-binding domain in the interval 2–77 (AVKVVMPKLG…PPGTAICYIG (76 aa)). At K43 the chain carries N6-lipoyllysine. The region spanning 118-155 (KISPVARKIAEKAGLDLKQLKGTGPGGRIVKDDVTKAL) is the Peripheral subunit-binding (PSBD) domain. Active-site residues include H371 and D375.

It belongs to the 2-oxoacid dehydrogenase family. Requires (R)-lipoate as cofactor.

It carries out the reaction N(6)-[(R)-dihydrolipoyl]-L-lysyl-[protein] + acetyl-CoA = N(6)-[(R)-S(8)-acetyldihydrolipoyl]-L-lysyl-[protein] + CoA. Its pathway is ketone degradation; acetoin degradation. This Bacillus subtilis (strain 168) protein is Dihydrolipoyllysine-residue acetyltransferase component of acetoin cleaving system (acoC).